We begin with the raw amino-acid sequence, 88 residues long: Cell division topological specificity factor (88 aa).

It belongs to the MinE family.

Functionally, prevents the cell division inhibition by proteins MinC and MinD at internal division sites while permitting inhibition at polar sites. This ensures cell division at the proper site by restricting the formation of a division septum at the midpoint of the long axis of the cell. The polypeptide is Cell division topological specificity factor (Aeromonas hydrophila subsp. hydrophila (strain ATCC 7966 / DSM 30187 / BCRC 13018 / CCUG 14551 / JCM 1027 / KCTC 2358 / NCIMB 9240 / NCTC 8049)).